The following is a 418-amino-acid chain: Alpha-(1-&gt;3)-arabinofuranosyltransferase (418 aa).

Transmembrane regions (helical) follow at residues 25–45 (NAVA…VLAI), 81–101 (YLYN…THFT), 102–122 (LARW…FGLL), 125–145 (LSGW…AMLT), 153–173 (IFSN…WCVV), 183–203 (VIGL…LPLV), 210–230 (LILG…LVPG), 266–286 (MEIT…LALL), 293–312 (PYFW…FFLS), 327–349 (IFTL…AYFF), and 372–392 (ATVG…IWFI).

Belongs to the glycosyltransferase 87 family.

It localises to the cell membrane. The enzyme catalyses Adds an alpha-D-arabinofuranosyl group from trans,octacis-decaprenylphospho-beta-D-arabinofuranose at the 3-O-position of an alpha-(1-&gt;5)-arabinofuranan chain attached to a beta-(1-&gt;5)-galactofuranan chain.. It participates in cell wall biogenesis; cell wall polysaccharide biosynthesis. In terms of biological role, involved in the biosynthesis of the arabinogalactan (AG) region of the mycolylarabinogalactan-peptidoglycan (mAGP) complex, an essential component of the corynebacterial cell wall. Catalyzes the addition of an arabinofuranosyl (Araf) residue from the sugar donor beta-D-arabinofuranosyl-1-monophosphoryldecaprenol (DPA) on the C-3 of an alpha-(1-&gt;5)-linked Araf from the arabinan backbone of AG. This Corynebacterium glutamicum (strain ATCC 13032 / DSM 20300 / JCM 1318 / BCRC 11384 / CCUG 27702 / LMG 3730 / NBRC 12168 / NCIMB 10025 / NRRL B-2784 / 534) protein is Alpha-(1-&gt;3)-arabinofuranosyltransferase.